Consider the following 398-residue polypeptide: uncharacterized protein (398 aa).

The next 2 membrane-spanning stretches (helical) occupy residues 31 to 51 (VVFS…CLLF) and 56 to 76 (AFIT…FFGC).

The protein belongs to the chlamydial CPn_0129/CT_036/TC_0306 family.

The protein localises to the cell membrane. This is an uncharacterized protein from Chlamydia muridarum (strain MoPn / Nigg).